A 401-amino-acid polypeptide reads, in one-letter code: Argininosuccinate synthase (401 aa).

9–17 (AYSGGLDTS) lines the ATP pocket. Y88 contributes to the L-citrulline binding site. G118 is a binding site for ATP. The L-aspartate site is built by T120, N124, and D125. Residue N124 coordinates L-citrulline. The L-citrulline site is built by R128, S176, S185, E261, and Y273.

This sequence belongs to the argininosuccinate synthase family. Type 1 subfamily. In terms of assembly, homotetramer.

It is found in the cytoplasm. The enzyme catalyses L-citrulline + L-aspartate + ATP = 2-(N(omega)-L-arginino)succinate + AMP + diphosphate + H(+). It participates in amino-acid biosynthesis; L-arginine biosynthesis; L-arginine from L-ornithine and carbamoyl phosphate: step 2/3. The polypeptide is Argininosuccinate synthase (Symbiobacterium thermophilum (strain DSM 24528 / JCM 14929 / IAM 14863 / T)).